We begin with the raw amino-acid sequence, 355 residues long: Undecaprenyl-phosphate alpha-N-acetylglucosaminyl 1-phosphate transferase (355 aa).

8 consecutive transmembrane segments (helical) span residues 1–21, 39–59, 63–83, 123–143, 182–202, 208–228, 237–257, and 315–335; these read MLSIFVTFLGAFLTLIVMRPL, GTIPLIGGASLFVGNLCYYLM, QLRLPYLYLFSIFVLLAIGIL, FQLTLGSIGLIITVFATIAII, WSFALIVSILPYLMLNLGIPF, VFMGDAGSTLIGFTIIWILLL, MNPVTALWIIAIPLIDMVAII, and WAMFVGFFILFFLYVYSITHA.

This sequence belongs to the glycosyltransferase 4 family. WecA subfamily. Mg(2+) is required as a cofactor. Mn(2+) serves as cofactor.

The protein localises to the cell inner membrane. It carries out the reaction di-trans,octa-cis-undecaprenyl phosphate + UDP-N-acetyl-alpha-D-glucosamine = N-acetyl-alpha-D-glucosaminyl-di-trans,octa-cis-undecaprenyl diphosphate + UMP. It participates in bacterial outer membrane biogenesis; LPS O-antigen biosynthesis. Its function is as follows. Catalyzes the transfer of the GlcNAc-1-phosphate moiety from UDP-GlcNAc onto the carrier lipid undecaprenyl phosphate (C55-P), yielding GlcNAc-pyrophosphoryl-undecaprenyl (GlcNAc-PP-C55). The protein is Undecaprenyl-phosphate alpha-N-acetylglucosaminyl 1-phosphate transferase of Haemophilus influenzae (strain ATCC 51907 / DSM 11121 / KW20 / Rd).